A 140-amino-acid polypeptide reads, in one-letter code: Large ribosomal subunit protein uL16c (140 aa).

The protein belongs to the universal ribosomal protein uL16 family. As to quaternary structure, part of the 50S ribosomal subunit.

The protein resides in the plastid. It localises to the chloroplast. The sequence is that of Large ribosomal subunit protein uL16c from Psilotum nudum (Whisk fern).